The primary structure comprises 1120 residues: Topless-related protein 1 (1120 aa).

A LisH domain is found at 4 to 36 (LSRELVFLILQFLDEEKFKETVHKLEQESGFFF). In terms of domain architecture, CTLH spans 34-92 (FFFNMKYFEDEVHNGNWDEVEKYLSGFTKVDDNRYSMKIFFEIRKQKYLEALDRHDRPK). Disordered regions lie at residues 210–235 (ARAPSPVNNPLLGSLPKAEGFPPLGA) and 283–307 (HPRTPPSNSAVDYPSGDSDHVSKRT). Serine 214 carries the phosphoserine modification. WD repeat units follow at residues 353 to 393 (SQGS…RLVQ), 415 to 454 (EPVVSVNRVIWSPDGSLFGVAYSRHIVQLYSYHGGEDMRQ), 460 to 501 (AHVG…KRYT), 504 to 545 (GHEA…SRVD), 548 to 591 (APGR…VKRT), 595 to 634 (FHKRSLGVVQFDTTKNRYLAAGDDFSIKFWDMDTIQLLTA), 639 to 678 (GGLQASPRIRFNKEGSLLAVSANDNMIKVMANSDGLRLLH), 699 to 745 (ERPA…EPSQ), 755 to 794 (MRVTKISRLIFTNSGNAILALASNAIHLLWKWQRNDRNAT), 822 to 860 (NPEEAVPCFALSKNDSYVMSASGGKISLFNMMTFKTMAT), 863 to 903 (PPPP…VKSK), 906 to 945 (GHSKRITGLAFSNVLNVLVSSGADAQLCVWNTDGWEKQKS), 999 to 1038 (ESAAPITHATFSCDSQLIYTSFMDATICVFSSANLRLRCR), and 1052 to 1091 (SNVHPLVIAAHPQESNMFAVGLSDGGVHIFEPLESEGKWG). Residues 1087 to 1120 (EGKWGVAPPPENGSASAVTATPSVGASASDQPQR) form a disordered region. Over residues 1099–1120 (GSASAVTATPSVGASASDQPQR) the composition is skewed to polar residues.

In terms of assembly, tetramer. Interacts with SNC1 (via TIR domain) and HDA19. Interacts with SPL (via EAR motif). Interacts with SPEAR3/TIE1. Binds to and corepresses GAF1/IDD2. Highly expressed in stamen primordium, microsporocyte, ovule primordium and megasporocyte during sporogenesis.

The protein localises to the nucleus. Transcriptional corepressor. Activates TIR-NB-LRR R protein-mediated immune responses through repression of negative regulators such as CNGC2/DND1. Negative regulator of jasmonate responses. This chain is Topless-related protein 1 (TPR1), found in Arabidopsis thaliana (Mouse-ear cress).